Here is a 102-residue protein sequence, read N- to C-terminus: Large ribosomal subunit protein bL21 (102 aa).

This sequence belongs to the bacterial ribosomal protein bL21 family. Part of the 50S ribosomal subunit. Contacts protein L20.

Its function is as follows. This protein binds to 23S rRNA in the presence of protein L20. The chain is Large ribosomal subunit protein bL21 from Cytophaga hutchinsonii (strain ATCC 33406 / DSM 1761 / CIP 103989 / NBRC 15051 / NCIMB 9469 / D465).